Consider the following 510-residue polypeptide: Glycerol kinase (510 aa).

An ADP-binding site is contributed by Thr-12. The ATP site is built by Thr-12, Thr-13, and Ser-14. Thr-12 contacts sn-glycerol 3-phosphate. ADP is bound at residue Arg-16. 3 residues coordinate sn-glycerol 3-phosphate: Arg-82, Glu-83, and Tyr-134. Glycerol is bound by residues Arg-82, Glu-83, and Tyr-134. At His-230 the chain carries Phosphohistidine; by HPr. Asp-244 contributes to the sn-glycerol 3-phosphate binding site. The glycerol site is built by Asp-244 and Gln-245. Thr-266 and Gly-309 together coordinate ADP. ATP-binding residues include Thr-266, Gly-309, Gln-313, and Gly-410. ADP contacts are provided by Gly-410 and Asn-414.

Belongs to the FGGY kinase family. Homotetramer and homodimer (in equilibrium). The phosphoenolpyruvate-dependent sugar phosphotransferase system (PTS), including enzyme I, and histidine-containing protein (HPr) are required for the phosphorylation, which leads to the activation of the enzyme.

The enzyme catalyses glycerol + ATP = sn-glycerol 3-phosphate + ADP + H(+). Its pathway is polyol metabolism; glycerol degradation via glycerol kinase pathway; sn-glycerol 3-phosphate from glycerol: step 1/1. Activated by phosphorylation and inhibited by fructose 1,6-bisphosphate (FBP). Functionally, key enzyme in the regulation of glycerol uptake and metabolism. Catalyzes the phosphorylation of glycerol to yield sn-glycerol 3-phosphate. This is Glycerol kinase from Bacillus cereus (strain ATCC 10987 / NRS 248).